A 181-amino-acid chain; its full sequence is Acireductone dioxygenase (181 aa).

Over residues 1-10 (MRAYIYDEES) the composition is skewed to acidic residues. The segment at 1–23 (MRAYIYDEESQLSPQDEHESSQS) is disordered. Fe(2+)-binding residues include histidine 82, histidine 84, glutamate 88, and histidine 128. Ni(2+) contacts are provided by histidine 82, histidine 84, glutamate 88, and histidine 128.

The protein belongs to the acireductone dioxygenase (ARD) family. Fe(2+) is required as a cofactor. Requires Ni(2+) as cofactor.

The protein localises to the cytoplasm. Its subcellular location is the nucleus. The catalysed reaction is 1,2-dihydroxy-5-(methylsulfanyl)pent-1-en-3-one + O2 = 4-methylsulfanyl-2-oxobutanoate + formate + 2 H(+). It carries out the reaction 1,2-dihydroxy-5-(methylsulfanyl)pent-1-en-3-one + O2 = 3-(methylsulfanyl)propanoate + CO + formate + 2 H(+). The protein operates within amino-acid biosynthesis; L-methionine biosynthesis via salvage pathway; L-methionine from S-methyl-5-thio-alpha-D-ribose 1-phosphate: step 5/6. Catalyzes 2 different reactions between oxygen and the acireductone 1,2-dihydroxy-3-keto-5-methylthiopentene (DHK-MTPene) depending upon the metal bound in the active site. Fe-containing acireductone dioxygenase (Fe-ARD) produces formate and 2-keto-4-methylthiobutyrate (KMTB), the alpha-ketoacid precursor of methionine in the methionine recycle pathway. Ni-containing acireductone dioxygenase (Ni-ARD) produces methylthiopropionate, carbon monoxide and formate, and does not lie on the methionine recycle pathway. This chain is Acireductone dioxygenase, found in Puccinia graminis f. sp. tritici (strain CRL 75-36-700-3 / race SCCL) (Black stem rust fungus).